Consider the following 685-residue polypeptide: Kinesin-like protein KIP2 (685 aa).

2 disordered regions span residues 11–46 (EHVG…GPAQ) and 63–101 (SRPS…SGAS). Low complexity predominate over residues 86–101 (GSPQSPDAPSSASGAS). A Kinesin motor domain is found at 113–446 (NVSVAIRIKP…VRFASRAKNI (334 aa)). ATP is bound at residue 185 to 192 (GMTGSGKT). Coiled-coil stretches lie at residues 464-486 (IIQN…RRSA) and 520-663 (LEVE…SALS). Positions 485–510 (SAAAPSGNGSTSPLDSPGVGGTSLSE) are disordered.

The protein belongs to the TRAFAC class myosin-kinesin ATPase superfamily. Kinesin family.

The protein resides in the cytoplasm. Its subcellular location is the cytoskeleton. Its function is as follows. Required for assembly of the mitotic spindle. The chain is Kinesin-like protein KIP2 (KIP2) from Eremothecium gossypii (strain ATCC 10895 / CBS 109.51 / FGSC 9923 / NRRL Y-1056) (Yeast).